The primary structure comprises 209 residues: Ribonuclease HII (209 aa).

Residues 19 to 208 form the RNase H type-2 domain; sequence GLVAGVDEAG…VARALQAPVA (190 aa). Residues D25, E26, and D117 each contribute to the a divalent metal cation site.

This sequence belongs to the RNase HII family. Mn(2+) serves as cofactor. The cofactor is Mg(2+).

It localises to the cytoplasm. It carries out the reaction Endonucleolytic cleavage to 5'-phosphomonoester.. Functionally, endonuclease that specifically degrades the RNA of RNA-DNA hybrids. This chain is Ribonuclease HII, found in Acidovorax ebreus (strain TPSY) (Diaphorobacter sp. (strain TPSY)).